The primary structure comprises 95 residues: Large ribosomal subunit protein bL25 (95 aa).

The protein belongs to the bacterial ribosomal protein bL25 family. Part of the 50S ribosomal subunit; part of the 5S rRNA/L5/L18/L25 subcomplex. Contacts the 5S rRNA. Binds to the 5S rRNA independently of L5 and L18.

In terms of biological role, this is one of the proteins that binds to the 5S RNA in the ribosome where it forms part of the central protuberance. This Mannheimia succiniciproducens (strain KCTC 0769BP / MBEL55E) protein is Large ribosomal subunit protein bL25.